The sequence spans 228 residues: UPF0173 metal-dependent hydrolase ABC2731 (228 aa).

Belongs to the UPF0173 family.

This chain is UPF0173 metal-dependent hydrolase ABC2731, found in Shouchella clausii (strain KSM-K16) (Alkalihalobacillus clausii).